The sequence spans 222 residues: Ribonuclease S-3 (222 aa).

The N-terminal stretch at 1-22 (MVHVVMMVFLLIVLILCSSTVG) is a signal peptide. Gln-31 is an RNA binding site. A disulfide bond links Cys-37 and Cys-44. Residue Asn-40 is glycosylated (N-linked (GlcNAc...) asparagine). Residues His-55, 92-93 (NV), Phe-102, 105-106 (KE), and 109-110 (KH) each bind RNA. Catalysis depends on His-55, which acts as the Proton donor. A disulfide bridge links Cys-70 with Cys-113. Residues Glu-106 and Lys-109 contribute to the active site. Residue His-110 is the Proton acceptor of the active site. N-linked (GlcNAc...) asparagine glycosylation occurs at Asn-138. 2 cysteine pairs are disulfide-bonded: Cys-177-Cys-215 and Cys-192-Cys-203.

The protein belongs to the RNase T2 family. In terms of processing, N-linked core structure at Asn-138 contains xylose.

The catalysed reaction is a ribonucleotidyl-ribonucleotide-RNA + H2O = a 3'-end 3'-phospho-ribonucleotide-RNA + a 5'-end dephospho-ribonucleoside-RNA + H(+). In terms of biological role, self-incompatibility (SI) is the inherited ability of a flowering plant to prevent self-fertilization by discriminating between self and non-self pollen during pollination. In many species, self-incompatibility is controlled by the single, multiallelic locus S. The polypeptide is Ribonuclease S-3 (Pyrus pyrifolia (Chinese pear)).